The primary structure comprises 207 residues: Putative transcriptional regulator (207 aa).

The Response regulatory domain maps to Lys3–Leu118. 4-aspartylphosphate is present on residues Asp9 and Asp53. One can recognise an HTH luxR-type domain in the interval Glu140–Glu205. Positions Leu155–Ser174 form a DNA-binding region, H-T-H motif.

Probable transcriptional regulator. The protein is Putative transcriptional regulator of Pseudomonas aeruginosa (strain ATCC 15692 / DSM 22644 / CIP 104116 / JCM 14847 / LMG 12228 / 1C / PRS 101 / PAO1).